The sequence spans 163 residues: uncharacterized protein (163 aa).

This is an uncharacterized protein from Methanocaldococcus jannaschii (strain ATCC 43067 / DSM 2661 / JAL-1 / JCM 10045 / NBRC 100440) (Methanococcus jannaschii).